We begin with the raw amino-acid sequence, 144 residues long: Transcriptional regulator SlyA (144 aa).

Residues 2–135 (ESSLGSDLAR…LNNIIAKLER (134 aa)) form the HTH marR-type domain. The segment at residues 49–72 (QIQLAKAIGIEQPSLVRTLDQLES) is a DNA-binding region (H-T-H motif).

It belongs to the SlyA family. As to quaternary structure, homodimer.

Its function is as follows. Transcription regulator that can specifically activate or repress expression of target genes. The chain is Transcriptional regulator SlyA from Blochmanniella floridana.